Consider the following 421-residue polypeptide: EGFR adapter protein (421 aa).

Disordered stretches follow at residues 18-94 (TFIS…PQLQ), 109-154 (DVQE…RLVD), 173-194 (EDSRPLMHSTCGSSLTSGSGCG), and 372-396 (PVPLTLPRPPSTRSQRSQGAYAGGT). The segment covering 21–30 (SSSSASSSSS) has biased composition (low complexity). Basic residues predominate over residues 62–89 (FFHHHHPPAHPHPPRQQPHPHSHSHPHP). The span at 109-120 (DVQELSGQEHPH) shows a compositional bias: basic and acidic residues. The span at 181 to 194 (STCGSSLTSGSGCG) shows a compositional bias: low complexity. The 94-residue stretch at 286–379 (WFQAGIPREI…LLPVPLTLPR (94 aa)) folds into the SH2 domain.

In terms of assembly, may interact (via SH2 domain) with Egfr (when phosphorylated). Detected along the wing margin, with high levels of expression in two stripes of cells on either side of the dorsal/ventral boundary and lower levels of expression in a small region at the anteroposterior boundary (at protein level). High levels of expression along two parallel stripes of cells on either side of the wing pouch dorsal/ventral boundary, and slightly lower levels of expression in a region either side of the anteroposterior boundary. Also expressed in discrete regions of the wing imaginal disk outside of the pouch. Expressed in eye imaginal disk photoreceptors with highest levels of expression in R7 photoreceptor cells.

Its function is as follows. Involved in the negative regulation of the Egfr/Ras signaling pathway. During wing morphogenesis, may function redundantly with PVRAP to inhibit Egfr activity and prevent uncontrolled cell growth. The polypeptide is EGFR adapter protein (Drosophila melanogaster (Fruit fly)).